The primary structure comprises 118 residues: Large ribosomal subunit protein uL24 (118 aa).

It belongs to the universal ribosomal protein uL24 family. In terms of assembly, part of the 50S ribosomal subunit.

In terms of biological role, one of two assembly initiator proteins, it binds directly to the 5'-end of the 23S rRNA, where it nucleates assembly of the 50S subunit. One of the proteins that surrounds the polypeptide exit tunnel on the outside of the subunit. The protein is Large ribosomal subunit protein uL24 of Prochlorococcus marinus (strain MIT 9313).